The sequence spans 330 residues: tRNA U34 carboxymethyltransferase (330 aa).

Residues lysine 91, tryptophan 105, lysine 110, glycine 130, 152 to 154 (DPS), 181 to 182 (IE), methionine 196, tyrosine 200, and arginine 315 each bind carboxy-S-adenosyl-L-methionine.

It belongs to the class I-like SAM-binding methyltransferase superfamily. CmoB family. In terms of assembly, homotetramer.

It catalyses the reaction carboxy-S-adenosyl-L-methionine + 5-hydroxyuridine(34) in tRNA = 5-carboxymethoxyuridine(34) in tRNA + S-adenosyl-L-homocysteine + H(+). Its function is as follows. Catalyzes carboxymethyl transfer from carboxy-S-adenosyl-L-methionine (Cx-SAM) to 5-hydroxyuridine (ho5U) to form 5-carboxymethoxyuridine (cmo5U) at position 34 in tRNAs. This is tRNA U34 carboxymethyltransferase from Shewanella amazonensis (strain ATCC BAA-1098 / SB2B).